Reading from the N-terminus, the 368-residue chain is Phospho-N-acetylmuramoyl-pentapeptide-transferase (368 aa).

Helical transmembrane passes span Thr32–Asp52, Thr79–Ala99, Leu102–Tyr122, Leu142–Gly160, Val176–Gly196, Gly207–Ala227, Ala244–Phe264, Ile271–Ala291, Ile296–Val316, and Gln345–Leu365.

Belongs to the glycosyltransferase 4 family. MraY subfamily. It depends on Mg(2+) as a cofactor.

Its subcellular location is the cell inner membrane. The catalysed reaction is UDP-N-acetyl-alpha-D-muramoyl-L-alanyl-gamma-D-glutamyl-meso-2,6-diaminopimeloyl-D-alanyl-D-alanine + di-trans,octa-cis-undecaprenyl phosphate = di-trans,octa-cis-undecaprenyl diphospho-N-acetyl-alpha-D-muramoyl-L-alanyl-D-glutamyl-meso-2,6-diaminopimeloyl-D-alanyl-D-alanine + UMP. It participates in cell wall biogenesis; peptidoglycan biosynthesis. Its function is as follows. Catalyzes the initial step of the lipid cycle reactions in the biosynthesis of the cell wall peptidoglycan: transfers peptidoglycan precursor phospho-MurNAc-pentapeptide from UDP-MurNAc-pentapeptide onto the lipid carrier undecaprenyl phosphate, yielding undecaprenyl-pyrophosphoryl-MurNAc-pentapeptide, known as lipid I. The polypeptide is Phospho-N-acetylmuramoyl-pentapeptide-transferase (Nitrobacter winogradskyi (strain ATCC 25391 / DSM 10237 / CIP 104748 / NCIMB 11846 / Nb-255)).